The chain runs to 272 residues: Putative phosphoenolpyruvate synthase regulatory protein (272 aa).

ADP is bound at residue 152 to 159 (GVSRCGKT).

This sequence belongs to the pyruvate, phosphate/water dikinase regulatory protein family. PSRP subfamily.

The enzyme catalyses [pyruvate, water dikinase] + ADP = [pyruvate, water dikinase]-phosphate + AMP + H(+). The catalysed reaction is [pyruvate, water dikinase]-phosphate + phosphate + H(+) = [pyruvate, water dikinase] + diphosphate. Functionally, bifunctional serine/threonine kinase and phosphorylase involved in the regulation of the phosphoenolpyruvate synthase (PEPS) by catalyzing its phosphorylation/dephosphorylation. The polypeptide is Putative phosphoenolpyruvate synthase regulatory protein (Pseudomonas fluorescens (strain SBW25)).